The primary structure comprises 301 residues: Methionyl-tRNA formyltransferase (301 aa).

109-112 serves as a coordination point for (6S)-5,6,7,8-tetrahydrofolate; the sequence is SLLP.

Belongs to the Fmt family.

The enzyme catalyses L-methionyl-tRNA(fMet) + (6R)-10-formyltetrahydrofolate = N-formyl-L-methionyl-tRNA(fMet) + (6S)-5,6,7,8-tetrahydrofolate + H(+). Attaches a formyl group to the free amino group of methionyl-tRNA(fMet). The formyl group appears to play a dual role in the initiator identity of N-formylmethionyl-tRNA by promoting its recognition by IF2 and preventing the misappropriation of this tRNA by the elongation apparatus. The chain is Methionyl-tRNA formyltransferase from Anaplasma marginale (strain St. Maries).